The chain runs to 311 residues: Protoheme IX farnesyltransferase (311 aa).

9 consecutive transmembrane segments (helical) span residues 33–53 (VVMLMLLTSLIGMLLATPSPA), 55–75 (LWLLVLGNLGIGLCAGAAAAV), 104–124 (NALLFSALLGGVGLWILSSFI), 127–147 (LTAWLTLASLLGYAVIYTLFL), 155–175 (IVIGGLAGAAPPLLGWTAVTG), 181–201 (GLLLVLIIFAWTPPHFWALAL), 228–248 (IVLYTVILIAVTLLPFATRMM), 252–272 (YLVGALVLGAGFLYRALKLLV), and 287–307 (IIYLMALFVVMLVDHYLFPIP).

This sequence belongs to the UbiA prenyltransferase family. Protoheme IX farnesyltransferase subfamily.

It is found in the cell inner membrane. The enzyme catalyses heme b + (2E,6E)-farnesyl diphosphate + H2O = Fe(II)-heme o + diphosphate. Its pathway is porphyrin-containing compound metabolism; heme O biosynthesis; heme O from protoheme: step 1/1. Its function is as follows. Converts heme B (protoheme IX) to heme O by substitution of the vinyl group on carbon 2 of heme B porphyrin ring with a hydroxyethyl farnesyl side group. The protein is Protoheme IX farnesyltransferase of Teredinibacter turnerae (strain ATCC 39867 / T7901).